The following is a 495-amino-acid chain: Potassium voltage-gated channel subfamily A member 1 (495 aa).

Residues M1–H30 form a disordered region. A tetramerization domain region spans residues M1 to E128. At M1–G164 the chain is on the cytoplasmic side. Position 23 is a phosphoserine (S23). A helical membrane pass occupies residues P165–L186. The Extracellular portion of the chain corresponds to E187–P220. An N-linked (GlcNAc...) asparagine glycan is attached at N207. A helical membrane pass occupies residues F221 to A242. C243 carries S-palmitoyl cysteine lipidation. The Cytoplasmic portion of the chain corresponds to C243–I253. The helical transmembrane segment at M254–A274 threads the bilayer. The Extracellular portion of the chain corresponds to E275–S287. Residues L288–H308 traverse the membrane as a helical; Voltage-sensor segment. At S309–M323 the chain is on the cytoplasmic side. An S4-S5 linker region spans residues K310–M323. S322 is subject to Phosphoserine; by PKA. A helical transmembrane segment spans residues R324–Y345. The Extracellular segment spans residues F346–I359. The segment at residues P360–T371 is an intramembrane region (helical). The short motif at T372–D377 is the Selectivity filter element. Residues T372–Y379 lie within the membrane without spanning it. At P380–K386 the chain is on the extracellular side. The chain crosses the membrane as a helical span at residues I387–Y415. At H416–V495 the chain is on the cytoplasmic side. S437 and S439 each carry phosphoserine. Position 446 is a phosphoserine; by PKA (S446). The PDZ-binding signature appears at T493–V495.

This sequence belongs to the potassium channel family. A (Shaker) (TC 1.A.1.2) subfamily. Kv1.1/KCNA1 sub-subfamily. Homotetramer and heterotetramer with other channel-forming alpha subunits, such as KCNA2, KCNA4, KCNA5, KCNA6 and KCNA7. Channel activity is regulated by interaction with the beta subunits KCNAB1 and KCNAB2. Identified in a complex with KCNA2 and KCNAB2. Interacts (via C-terminus) with the PDZ domains of DLG1, DLG2 and DLG4. Interacts with LGI1 within a complex containing LGI1, KCNA4 and KCNAB1. Interacts (via N-terminus) with STX1A; this promotes channel inactivation. Interacts (via N-terminus) with the heterodimer formed by GNB1 and GNG2; this promotes channel inactivation. Can interact simultaneously with STX1A and the heterodimer formed by GNB1 and GNG2. Interacts (via cytoplasmic N-terminal domain) with KCNRG; this inhibits channel activity. Interacts with ANK3; this inhibits channel activity. Interacts with ADAM11. Post-translationally, N-glycosylated. In terms of processing, palmitoylated on Cys-243; which may be required for membrane targeting. Phosphorylated on tyrosine residues. Phosphorylation increases in response to NRG1; this inhibits channel activity. Phosphorylation at Ser-446 regulates channel activity by down-regulating expression at the cell membrane. In terms of tissue distribution, detected adjacent to nodes of Ranvier in juxtaparanodal zones in spinal cord nerve fibers, but also in paranodal regions in some myelinated spinal cord axons (at protein level). Detected in the islet of Langerhans.

Its subcellular location is the cell membrane. The protein resides in the membrane. It is found in the cell projection. It localises to the axon. The protein localises to the cytoplasmic vesicle. Its subcellular location is the perikaryon. The protein resides in the endoplasmic reticulum. It is found in the dendrite. It localises to the cell junction. The protein localises to the synapse. Its subcellular location is the presynaptic cell membrane. The protein resides in the presynapse. The catalysed reaction is K(+)(in) = K(+)(out). With respect to regulation, inhibited by 1.1 mM 4-aminopyridine (4-AP) and by 20 mM tetraethylammonium (TEA), but not by charybdotoxin (CTX). Inhibited by dendrotoxin (DTX). Its function is as follows. Voltage-gated potassium channel that mediates transmembrane potassium transport in excitable membranes, primarily in the brain and the central nervous system, but also in the kidney. Contributes to the regulation of the membrane potential and nerve signaling, and prevents neuronal hyperexcitability. Forms tetrameric potassium-selective channels through which potassium ions pass in accordance with their electrochemical gradient. The channel alternates between opened and closed conformations in response to the voltage difference across the membrane. Can form functional homotetrameric channels and heterotetrameric channels that contain variable proportions of KCNA1, KCNA2, KCNA4, KCNA5, KCNA6, KCNA7, and possibly other family members as well; channel properties depend on the type of alpha subunits that are part of the channel. Channel properties are modulated by cytoplasmic beta subunits that regulate the subcellular location of the alpha subunits and promote rapid inactivation of delayed rectifier potassium channels. In vivo, membranes probably contain a mixture of heteromeric potassium channel complexes, making it difficult to assign currents observed in intact tissues to any particular potassium channel family member. Homotetrameric KCNA1 forms a delayed-rectifier potassium channel that opens in response to membrane depolarization, followed by slow spontaneous channel closure. In contrast, a heterotetrameric channel formed by KCNA1 and KCNA4 shows rapid inactivation. Regulates neuronal excitability in hippocampus, especially in mossy fibers and medial perforant path axons, preventing neuronal hyperexcitability. Response to toxins that are selective for KCNA1, respectively for KCNA2, suggests that heteromeric potassium channels composed of both KCNA1 and KCNA2 play a role in pacemaking and regulate the output of deep cerebellar nuclear neurons. May function as down-stream effector for G protein-coupled receptors and inhibit GABAergic inputs to basolateral amygdala neurons. May contribute to the regulation of neurotransmitter release, such as gamma-aminobutyric acid (GABA) release. Plays a role in regulating the generation of action potentials and preventing hyperexcitability in myelinated axons of the vagus nerve, and thereby contributes to the regulation of heart contraction. Required for normal neuromuscular responses. Regulates the frequency of neuronal action potential firing in response to mechanical stimuli, and plays a role in the perception of pain caused by mechanical stimuli, but does not play a role in the perception of pain due to heat stimuli. Required for normal responses to auditory stimuli and precise location of sound sources, but not for sound perception. The use of toxins that block specific channels suggest that it contributes to the regulation of the axonal release of the neurotransmitter dopamine. Required for normal postnatal brain development and normal proliferation of neuronal precursor cells in the brain. Plays a role in the reabsorption of Mg(2+) in the distal convoluted tubules in the kidney and in magnesium ion homeostasis, probably via its effect on the membrane potential. The sequence is that of Potassium voltage-gated channel subfamily A member 1 from Homo sapiens (Human).